The sequence spans 556 residues: uncharacterized protein (556 aa).

5 disordered regions span residues 1 to 40 (MSNS…TNEN), 80 to 243 (NTTQ…KQSW), 278 to 324 (YDSD…SSLP), 363 to 391 (RTKQ…KFVD), and 422 to 525 (DSKQ…ENSA). The span at 7-25 (NNNNNTNNNNNNNNNNNGN) shows a compositional bias: low complexity. The segment covering 30–40 (EEPDDDSTNEN) has biased composition (acidic residues). Low complexity-rich tracts occupy residues 80 to 133 (NTTQ…GTRS) and 164 to 181 (NDNN…NDSN). A compositionally biased stretch (acidic residues) spans 182–192 (IVDDDEDEEEF). Residues 207–226 (STSSPSSTSSPIVSPQTQTS) are compositionally biased toward low complexity. Positions 227-243 (KLESSMDVSPSSGKQSW) are enriched in polar residues. 3 stretches are compositionally biased toward low complexity: residues 292–322 (NNSS…NSSS), 369–388 (KVQQ…NNNK), and 425–525 (QQNV…ENSA). Residues 528–548 (GSFIKNAVIFIFILLLMVVGF) traverse the membrane as a helical segment.

The protein resides in the membrane. This is an uncharacterized protein from Dictyostelium discoideum (Social amoeba).